The sequence spans 491 residues: Cobyric acid synthase (491 aa).

Residues 250 to 441 enclose the GATase cobBQ-type domain; sequence DLQITVVRLP…LHGLFDNGPW (192 aa). Cys331 functions as the Nucleophile in the catalytic mechanism. His433 is a catalytic residue.

The protein belongs to the CobB/CobQ family. CobQ subfamily.

It participates in cofactor biosynthesis; adenosylcobalamin biosynthesis. In terms of biological role, catalyzes amidations at positions B, D, E, and G on adenosylcobyrinic A,C-diamide. NH(2) groups are provided by glutamine, and one molecule of ATP is hydrogenolyzed for each amidation. This is Cobyric acid synthase from Trichormus variabilis (strain ATCC 29413 / PCC 7937) (Anabaena variabilis).